The sequence spans 159 residues: 2-C-methyl-D-erythritol 2,4-cyclodiphosphate synthase (159 aa).

Residues aspartate 10 and histidine 12 each coordinate a divalent metal cation. Residues 10–12 and 37–38 each bind 4-CDP-2-C-methyl-D-erythritol 2-phosphate; these read DVH and HS. Histidine 45 contributes to the a divalent metal cation binding site. 4-CDP-2-C-methyl-D-erythritol 2-phosphate is bound by residues 59–61, 64–68, 103–109, 135–138, phenylalanine 142, and arginine 145; these read DIG, FPDTD, AQAPKML, and TTTE.

This sequence belongs to the IspF family. As to quaternary structure, homotrimer. A divalent metal cation serves as cofactor.

It catalyses the reaction 4-CDP-2-C-methyl-D-erythritol 2-phosphate = 2-C-methyl-D-erythritol 2,4-cyclic diphosphate + CMP. It functions in the pathway isoprenoid biosynthesis; isopentenyl diphosphate biosynthesis via DXP pathway; isopentenyl diphosphate from 1-deoxy-D-xylulose 5-phosphate: step 4/6. Its function is as follows. Involved in the biosynthesis of isopentenyl diphosphate (IPP) and dimethylallyl diphosphate (DMAPP), two major building blocks of isoprenoid compounds. Catalyzes the conversion of 4-diphosphocytidyl-2-C-methyl-D-erythritol 2-phosphate (CDP-ME2P) to 2-C-methyl-D-erythritol 2,4-cyclodiphosphate (ME-CPP) with a corresponding release of cytidine 5-monophosphate (CMP). In Francisella tularensis subsp. novicida (strain U112), this protein is 2-C-methyl-D-erythritol 2,4-cyclodiphosphate synthase.